The sequence spans 140 residues: Putative esterase MT1895 (140 aa).

This sequence belongs to the thioesterase PaaI family.

The polypeptide is Putative esterase MT1895 (Mycobacterium tuberculosis (strain CDC 1551 / Oshkosh)).